A 283-amino-acid polypeptide reads, in one-letter code: Tetraspanin-33 (283 aa).

Topologically, residues 1-24 (MARRPRAPAASGEEFSFVSPLVKY) are cytoplasmic. The helical transmembrane segment at 25–45 (LLFFFNMLFWVISMVMVAVGV) threads the bilayer. At 46-64 (YARLMKHAEAALACLAVDP) the chain is on the extracellular side. A helical membrane pass occupies residues 65–85 (AILLIVVGVLMFLLTFCGCIG). The Cytoplasmic segment spans residues 86–96 (SLRENICLLQT). A helical membrane pass occupies residues 97–117 (FSLCLTAVFLLQLAAGILGFV). At 118 to 235 (FSDKARGKVS…DKLVNWIHSN (118 aa)) the chain is on the extracellular side. 4 cysteine pairs are disulfide-bonded: C156-C224, C157-C189, C173-C183, and C190-C203. N-linked (GlcNAc...) asparagine glycosylation is present at N172. A helical membrane pass occupies residues 236–256 (LFLLGGVALGLAIPQLVGILL). At 257-283 (SQILVNQIKDQIKLQLYNQQHRADPWY) the chain is on the cytoplasmic side.

The protein belongs to the tetraspanin (TM4SF) family. As to quaternary structure, homodimer; disulfide-linked. Interacts (via extracellular domain) with ADAM10 (via extracellular domain). Interacts (via cytoplasmic domain) with PLEKHA7 (via WW domains); the interaction is dependent on PDZD11 being bound to PLEKHA7 and facilitates the docking of ADAM10 to zonula adherens. In terms of tissue distribution, predominantly expressed in erythroblasts.

Its subcellular location is the cell membrane. It localises to the cell junction. The protein resides in the adherens junction. The protein localises to the cytoplasm. Part of TspanC8 subgroup, composed of 6 members that interact with the transmembrane metalloprotease ADAM10. This interaction is required for ADAM10 exit from the endoplasmic reticulum and for enzymatic maturation and trafficking to the cell surface as well as substrate specificity. Different TspanC8/ADAM10 complexes have distinct substrates. Plays an important role in normal erythropoiesis. It has a role in the differentiation of erythroid progenitors. Negatively regulates ligand-induced Notch activity probably by regulating ADAM10 activity. Mediates docking of ADAM10 to zonula adherens by interacting with ADAM10 and, in a PDZD11-dependent manner, with the zonula adherens protein PLEKHA7. The protein is Tetraspanin-33 of Homo sapiens (Human).